Here is a 447-residue protein sequence, read N- to C-terminus: Tubulin beta-1 chain (447 aa).

Gln11, Glu69, Ser138, Gly142, Thr143, Gly144, Asn204, and Asn226 together coordinate GTP. Position 69 (Glu69) interacts with Mg(2+). The segment at 427 to 447 is disordered; it reads EATADEDAEFEEEQEAEVEEN. Acidic residues predominate over residues 429–447; that stretch reads TADEDAEFEEEQEAEVEEN.

It belongs to the tubulin family. In terms of assembly, dimer of alpha and beta chains. A typical microtubule is a hollow water-filled tube with an outer diameter of 25 nm and an inner diameter of 15 nM. Alpha-beta heterodimers associate head-to-tail to form protofilaments running lengthwise along the microtubule wall with the beta-tubulin subunit facing the microtubule plus end conferring a structural polarity. Microtubules usually have 13 protofilaments but different protofilament numbers can be found in some organisms and specialized cells. Requires Mg(2+) as cofactor.

It is found in the cytoplasm. Its subcellular location is the cytoskeleton. Tubulin is the major constituent of microtubules, a cylinder consisting of laterally associated linear protofilaments composed of alpha- and beta-tubulin heterodimers. Microtubules grow by the addition of GTP-tubulin dimers to the microtubule end, where a stabilizing cap forms. Below the cap, tubulin dimers are in GDP-bound state, owing to GTPase activity of alpha-tubulin. This chain is Tubulin beta-1 chain, found in Glossina morsitans morsitans (Savannah tsetse fly).